The sequence spans 247 residues: Probable transcriptional regulatory protein lpg1286 (247 aa).

Belongs to the TACO1 family.

It is found in the cytoplasm. This chain is Probable transcriptional regulatory protein lpg1286, found in Legionella pneumophila subsp. pneumophila (strain Philadelphia 1 / ATCC 33152 / DSM 7513).